The following is a 381-amino-acid chain: Putrescine N-methyltransferase 3 (381 aa).

The disordered stretch occupies residues 21–81 (MNGYQNGTSK…TISHDNGNEL (61 aa)). Polar residues-rich tracts occupy residues 23 to 39 (GYQNGTSKHQNGHQNGT) and 46 to 81 (HQNGISEHQNGHQNGTSEHQNGHQNGTISHDNGNEL). A PABS domain is found at 92–329 (PGWFSEFSAL…GVIGYMLCST (238 aa)). S-adenosyl-L-methionine is bound by residues Q123, E198, and 229–230 (DG). Catalysis depends on D248, which acts as the Proton acceptor. Y317 contributes to the S-adenosyl-L-methionine binding site.

It belongs to the class I-like SAM-binding methyltransferase superfamily. Putrescine methyltransferase family. As to expression, predominantly expressed in roots.

It catalyses the reaction putrescine + S-adenosyl-L-methionine = N-methylputrescine + S-adenosyl-L-homocysteine + H(+). It functions in the pathway alkaloid biosynthesis; nicotine biosynthesis. Involved in the biosynthesis of pyridine alkaloid natural products, leading mainly to the production of anabasine, anatabine, nicotine and nornicotine, effective deterrents against herbivores with antiparasitic and pesticide properties (neurotoxins); nornicotine serves as the precursor in the synthesis of the carcinogen compound N'-nitrosonornicotine (NNN). Methyltransferase that mediates the conversion of putrescine to N-methylputrescine. Promotes leaves ripening. This is Putrescine N-methyltransferase 3 from Nicotiana tabacum (Common tobacco).